The primary structure comprises 55 residues: ATP synthase F(0) complex subunit 8 (55 aa).

Residues 4-24 (LNPHPWFSIFITSWLILIIIL) form a helical membrane-spanning segment.

Belongs to the ATPase protein 8 family. In terms of assembly, component of the ATP synthase complex composed at least of ATP5F1A/subunit alpha, ATP5F1B/subunit beta, ATP5MC1/subunit c (homooctomer), MT-ATP6/subunit a, MT-ATP8/subunit 8, ATP5ME/subunit e, ATP5MF/subunit f, ATP5MG/subunit g, ATP5MK/subunit k, ATP5MJ/subunit j, ATP5F1C/subunit gamma, ATP5F1D/subunit delta, ATP5F1E/subunit epsilon, ATP5PF/subunit F6, ATP5PB/subunit b, ATP5PD/subunit d, ATP5PO/subunit OSCP. ATP synthase complex consists of a soluble F(1) head domain (subunits alpha(3) and beta(3)) - the catalytic core - and a membrane F(0) domain - the membrane proton channel (subunits c, a, 8, e, f, g, k and j). These two domains are linked by a central stalk (subunits gamma, delta, and epsilon) rotating inside the F1 region and a stationary peripheral stalk (subunits F6, b, d, and OSCP).

It localises to the mitochondrion membrane. Subunit 8, of the mitochondrial membrane ATP synthase complex (F(1)F(0) ATP synthase or Complex V) that produces ATP from ADP in the presence of a proton gradient across the membrane which is generated by electron transport complexes of the respiratory chain. ATP synthase complex consist of a soluble F(1) head domain - the catalytic core - and a membrane F(1) domain - the membrane proton channel. These two domains are linked by a central stalk rotating inside the F(1) region and a stationary peripheral stalk. During catalysis, ATP synthesis in the catalytic domain of F(1) is coupled via a rotary mechanism of the central stalk subunits to proton translocation. In vivo, can only synthesize ATP although its ATP hydrolase activity can be activated artificially in vitro. Part of the complex F(0) domain. This chain is ATP synthase F(0) complex subunit 8, found in Pelomedusa subrufa (African side-necked turtle).